A 102-amino-acid polypeptide reads, in one-letter code: Putative pterin-4-alpha-carbinolamine dehydratase (102 aa).

The protein belongs to the pterin-4-alpha-carbinolamine dehydratase family.

The enzyme catalyses (4aS,6R)-4a-hydroxy-L-erythro-5,6,7,8-tetrahydrobiopterin = (6R)-L-erythro-6,7-dihydrobiopterin + H2O. The polypeptide is Putative pterin-4-alpha-carbinolamine dehydratase (Burkholderia ambifaria (strain MC40-6)).